A 493-amino-acid chain; its full sequence is MGWNGGLTSPSMEEHFYPFLIERRPSYMEEDEEEHEDEDLSLVLEKKDKDLLLAAELGKALLERNDQLMKAKDALEEELRETLETIEQEKHDMRLKMEVQESEWRAQVADLESDLAEARLQMQQLLSEQRECGRESASAAQELSEQNQRLVEQLAQASQVEQALNMELKSLREENRDLTISRGQFAPCLQSLRSENVLLLENKKEMESQTKQLQDENDNVQNQLISAKEGIFHLQRQKKDAELQVQQLQLEAQKLRDSQRTLQLQVKELQEELHMRDSQFSTHFSLHSEIQQSTAGQDHEMTTEAFPGLPCLPPSPYNLQKMGRNSVETQSITSDYMDTYLTEREGDLLRDSEEETIRLQDKVTMQHVELTTLQEEVQRLQDLLQQNNLDSIAKQAVLDRDEALMKKGELEQELARCQMEKESLNLQLLSTIQQKVMLSQELEAWQDDMQIVINQQLQSQKQQETQKVPETPQNSFMRRDSKQGRIFSFFKNI.

2 coiled-coil regions span residues 56 to 275 (ELGK…ELHM) and 365 to 431 (MQHV…LLST).

This sequence belongs to the BICDR family.

The protein is BICD family-like cargo adapter 2 (bicdl2) of Xenopus laevis (African clawed frog).